A 283-amino-acid chain; its full sequence is DNA repair protein RecO (283 aa).

The span at 254–264 (SSPASVGSSAT) shows a compositional bias: polar residues. The disordered stretch occupies residues 254–283 (SSPASVGSSATRYFAQGDTDENDRDPPGAR).

This sequence belongs to the RecO family.

Involved in DNA repair and RecF pathway recombination. In Roseiflexus sp. (strain RS-1), this protein is DNA repair protein RecO.